A 393-amino-acid polypeptide reads, in one-letter code: tRNA-specific 2-thiouridylase MnmA (393 aa).

ATP is bound by residues alanine 19–serine 26 and leucine 45. The active-site Nucleophile is cysteine 113. Cysteine 113 and cysteine 210 are oxidised to a cystine. Glycine 137 contributes to the ATP binding site. Positions arginine 160–glutamine 162 are interaction with tRNA. Cysteine 210 functions as the Cysteine persulfide intermediate in the catalytic mechanism.

The protein belongs to the MnmA/TRMU family.

The protein localises to the cytoplasm. The enzyme catalyses S-sulfanyl-L-cysteinyl-[protein] + uridine(34) in tRNA + AH2 + ATP = 2-thiouridine(34) in tRNA + L-cysteinyl-[protein] + A + AMP + diphosphate + H(+). In terms of biological role, catalyzes the 2-thiolation of uridine at the wobble position (U34) of tRNA, leading to the formation of s(2)U34. The polypeptide is tRNA-specific 2-thiouridylase MnmA (Afipia carboxidovorans (strain ATCC 49405 / DSM 1227 / KCTC 32145 / OM5) (Oligotropha carboxidovorans)).